A 473-amino-acid polypeptide reads, in one-letter code: N-lysine methyltransferase SETD6 (473 aa).

An N6-methylated lysine; by autocatalysis modification is found at Lys-39. An SET domain is found at 60 to 286 (PPAQVAVSRQ…KGHEIFNTYG (227 aa)). 73-75 (AGY) lines the S-adenosyl-L-methionine pocket. Trp-122 contributes to the substrate binding site. Lys-179 carries the N6-methylated lysine; by autocatalysis modification. Tyr-223 is a binding site for S-adenosyl-L-methionine. Substrate-binding residues include Ser-224 and Gln-226. 251–252 (NH) contributes to the S-adenosyl-L-methionine binding site. Positions 262 and 297 each coordinate substrate. Residue Tyr-297 coordinates S-adenosyl-L-methionine. Lys-372 carries the post-translational modification N6-methylated lysine; by autocatalysis.

Belongs to the class V-like SAM-binding methyltransferase superfamily. Histone-lysine methyltransferase family. SETD6 subfamily. In terms of assembly, monomer, homodimer and homotrimer; these structures are stabilized in the presence of S-adenosyl-L-methionine (SAM). Automethylated; Lys-39 and Lys-179 serve as the major automethylation sites.

Its subcellular location is the nucleus. The catalysed reaction is L-lysyl-[protein] + S-adenosyl-L-methionine = N(6)-methyl-L-lysyl-[protein] + S-adenosyl-L-homocysteine + H(+). It carries out the reaction L-lysyl(8)-[histone H2AZ] + S-adenosyl-L-methionine = N(6)-methyl-L-lysyl(8)-[histone H2AZ] + S-adenosyl-L-homocysteine + H(+). Its activity is regulated as follows. Activated by automethylation. Its function is as follows. Protein-lysine N-methyltransferase. Monomethylates 'Lys-310' of the RELA subunit of NF-kappa-B complex, leading to down-regulation of NF-kappa-B transcription factor activity. Monomethylates 'Lys-8' of H2AZ (H2AZK8me1). Required for the maintenance of embryonic stem cell self-renewal. Methylates PAK4. This Homo sapiens (Human) protein is N-lysine methyltransferase SETD6.